A 134-amino-acid polypeptide reads, in one-letter code: Probable RNA-binding protein MJ0652 (134 aa).

The CRM domain maps to 11-108; the sequence is RKLTGKMKRM…REGWKKYLAK (98 aa).

The polypeptide is Probable RNA-binding protein MJ0652 (Methanocaldococcus jannaschii (strain ATCC 43067 / DSM 2661 / JAL-1 / JCM 10045 / NBRC 100440) (Methanococcus jannaschii)).